Here is a 262-residue protein sequence, read N- to C-terminus: Adenosine deaminase RL5 (262 aa).

12 residues coordinate Cu cation: N36, Y40, M68, H73, C75, N114, C118, H135, C172, C175, C234, and C237.

The protein belongs to the purine nucleoside phosphorylase YfiH/LACC1 family. Homodimer. The cofactor is Cu cation.

It catalyses the reaction adenosine + phosphate = alpha-D-ribose 1-phosphate + adenine. It carries out the reaction S-methyl-5'-thioadenosine + phosphate = 5-(methylsulfanyl)-alpha-D-ribose 1-phosphate + adenine. The catalysed reaction is inosine + phosphate = alpha-D-ribose 1-phosphate + hypoxanthine. The enzyme catalyses adenosine + H2O + H(+) = inosine + NH4(+). In terms of biological role, purine nucleoside enzyme that catalyzes the phosphorolysis of adenosine and inosine nucleosides, yielding D-ribose 1-phosphate and the respective free bases, adenine and hypoxanthine. Also catalyzes the phosphorolysis of S-methyl-5'-thioadenosine into adenine and S-methyl-5-thio-alpha-D-ribose 1-phosphate. Also has adenosine deaminase activity. Also acts as a multicopper oxidase able to oxidize a wide variety of polyphenols and related compounds in vitro. Displays substrate preference as follows: syringaldazine &gt; 2,6-dimethoxyphenol &gt; veratryl alcohol &gt; guaiacol &gt; tetramethylbenzidine &gt; 4-methoxybenzyl alcohol &gt; 2,2'-azino-bis(3-ethylbenzthiazoline-6-sulfonic acid) (ABTS) &gt;&gt; phenol red &gt; 1-hydroxybenzotriazole. Cannot use 3,4-dimetoxybenzyl alcohol and violuric acid as substrates. As this enzyme is derived from a rumen microbial community, it may have a role in the digestion of complex plant materials such as ryegrass lignin. The protein is Adenosine deaminase RL5 of Unknown prokaryotic organism.